A 95-amino-acid polypeptide reads, in one-letter code: Co-chaperonin GroES (95 aa).

This sequence belongs to the GroES chaperonin family. In terms of assembly, heptamer of 7 subunits arranged in a ring. Interacts with the chaperonin GroEL.

Its subcellular location is the cytoplasm. Together with the chaperonin GroEL, plays an essential role in assisting protein folding. The GroEL-GroES system forms a nano-cage that allows encapsulation of the non-native substrate proteins and provides a physical environment optimized to promote and accelerate protein folding. GroES binds to the apical surface of the GroEL ring, thereby capping the opening of the GroEL channel. This is Co-chaperonin GroES from Xylella fastidiosa (strain M23).